Reading from the N-terminus, the 369-residue chain is Velvet complex subunit B (369 aa).

Disordered regions lie at residues 1 to 54, 138 to 174, and 346 to 369; these read MYAV…STVH, SISTAMSSSYPPPPHPTSSDYPASYQTNPYGQPVGQP, and KDGVKGQGSRGRHSDEDDGLDNEY. The segment covering 13–27 has biased composition (pro residues); the sequence is HPPPLSMDRIPPPST. The Velvet domain occupies 53–345; that stretch reads VHDGRIWSLQ…ANQGIKIPIR (293 aa).

This sequence belongs to the velvet family. VelB subfamily. Component of the heterotrimeric velvet complex composed of laeA, veA and velB; VeA acting as a bridging protein between laeA and velB. Interacts directly with veA. Forms a heterodimeric complex with vosA; the formation of the velB-vosA complex is light-dependent.

It is found in the nucleus. The protein resides in the cytoplasm. Its function is as follows. Component of the velvet transcription factor complex that controls sexual/asexual developmental ratio in response to light, promoting sexual development in the darkness while stimulating asexual sporulation under illumination. The velvet complex acts as a global regulator for secondary metabolite gene expression. Component of the velB-VosA heterodimeric complex that plays a dual role in activating genes associated with spore maturation and repressing certain development-associated genes. The velB-VosA complex binds DNA through the DNA-binding domain of vosA that recognizes an 11-nucleotide consensus sequence 5'-CTGGCCGCGGC-3' consisting of two motifs in the promoters of key developmental regulatory genes. The vosA-velB complex binds to the beta-glucan synthase fksA gene promoter in asexual spores for repression. In Emericella nidulans (strain FGSC A4 / ATCC 38163 / CBS 112.46 / NRRL 194 / M139) (Aspergillus nidulans), this protein is Velvet complex subunit B.